A 1373-amino-acid chain; its full sequence is DNA-directed RNA polymerase subunit beta (1373 aa).

It belongs to the RNA polymerase beta chain family. As to quaternary structure, the RNAP catalytic core consists of 2 alpha, 1 beta, 1 beta' and 1 omega subunit. When a sigma factor is associated with the core the holoenzyme is formed, which can initiate transcription.

It catalyses the reaction RNA(n) + a ribonucleoside 5'-triphosphate = RNA(n+1) + diphosphate. In terms of biological role, DNA-dependent RNA polymerase catalyzes the transcription of DNA into RNA using the four ribonucleoside triphosphates as substrates. This is DNA-directed RNA polymerase subunit beta from Rickettsia felis (strain ATCC VR-1525 / URRWXCal2) (Rickettsia azadi).